Consider the following 81-residue polypeptide: Exodeoxyribonuclease 7 small subunit (81 aa).

This sequence belongs to the XseB family. Heterooligomer composed of large and small subunits.

Its subcellular location is the cytoplasm. It catalyses the reaction Exonucleolytic cleavage in either 5'- to 3'- or 3'- to 5'-direction to yield nucleoside 5'-phosphates.. In terms of biological role, bidirectionally degrades single-stranded DNA into large acid-insoluble oligonucleotides, which are then degraded further into small acid-soluble oligonucleotides. The polypeptide is Exodeoxyribonuclease 7 small subunit (Pseudomonas syringae pv. syringae (strain B728a)).